The primary structure comprises 200 residues: Ras-related protein Rab-10 (200 aa).

GTP is bound by residues Ser18, Gly19, Val20, Gly21, Lys22, Thr23, Cys24, Asn35, Thr36, Ser40, and Thr41. Thr23 serves as a coordination point for Mg(2+). Short sequence motifs (switch) lie at residues 32–46 (DAFN…GIDF) and 64–81 (DTAG…YYRG). Mg(2+)-binding residues include Thr41 and Asp64. Residues Gly67, Asn122, Lys123, Asp125, Met126, Ser152, Ala153, and Lys154 each coordinate GTP. The interval 181-200 (RENVDISTTGGGTGLKKCCS) is disordered. S-geranylgeranyl cysteine attachment occurs at residues Cys198 and Cys199.

Belongs to the small GTPase superfamily. Rab family. Mg(2+) serves as cofactor.

It is found in the cytoplasmic vesicle membrane. The protein localises to the golgi apparatus. Its subcellular location is the trans-Golgi network membrane. It localises to the endosome membrane. The protein resides in the recycling endosome membrane. It is found in the cytoplasmic vesicle. The protein localises to the phagosome membrane. Its subcellular location is the cell projection. It localises to the cilium. The protein resides in the endoplasmic reticulum membrane. The enzyme catalyses GTP + H2O = GDP + phosphate + H(+). Regulated by guanine nucleotide exchange factors (GEFs) which promote the exchange of bound GDP for free GTP. Regulated by GTPase activating proteins (GAPs) which increase the GTP hydrolysis activity. Inhibited by GDP dissociation inhibitors (GDIs) which prevent Rab-GDP dissociation. The small GTPases Rab are key regulators of intracellular membrane trafficking, from the formation of transport vesicles to their fusion with membranes. Rabs cycle between an inactive GDP-bound form and an active GTP-bound form that is able to recruit to membranes different set of downstream effectors directly responsible for vesicle formation, movement, tethering and fusion. That Rab is mainly involved in the biosynthetic transport of proteins from the Golgi to the plasma membrane. Also plays a specific role in asymmetric protein transport to the plasma membrane within the polarized neuron and epithelial cells. In neurons, it is involved in axonogenesis through regulation of vesicular membrane trafficking toward the axonal plasma membrane while in epithelial cells, it regulates transport from the Golgi to the basolateral membrane. Moreover, may play a role in the basolateral recycling pathway and in phagosome maturation. Finally, may play a role in endoplasmic reticulum dynamics and morphology controlling tubulation along microtubules and tubules fusion. May participate in the export of neosynthesized proteins through a Rab-dependent endosomal export route. The protein is Ras-related protein Rab-10 of Diplobatis ommata (Ocellated electric ray).